A 113-amino-acid chain; its full sequence is uncharacterized protein (113 aa).

The N-terminal stretch at 1 to 22 is a signal peptide; the sequence is MCRFPTFLLIAIAITMLPTILS. Asparagine 47 carries an N-linked (GlcNAc...) asparagine glycan.

It is found in the secreted. This is an uncharacterized protein from Caenorhabditis elegans.